The sequence spans 474 residues: Bifunctional protein HldE (474 aa).

The ribokinase stretch occupies residues 1–317 (MKLSMPRFDR…RRAVQREQGS (317 aa)). 194 to 197 (NLAE) contacts ATP. Residue aspartate 263 is part of the active site. Residues 343-474 (FTNGCFDILH…GIVEKIRRQP (132 aa)) form a cytidylyltransferase region.

This sequence in the N-terminal section; belongs to the carbohydrate kinase PfkB family. The protein in the C-terminal section; belongs to the cytidylyltransferase family. Homodimer.

The enzyme catalyses D-glycero-beta-D-manno-heptose 7-phosphate + ATP = D-glycero-beta-D-manno-heptose 1,7-bisphosphate + ADP + H(+). It catalyses the reaction D-glycero-beta-D-manno-heptose 1-phosphate + ATP + H(+) = ADP-D-glycero-beta-D-manno-heptose + diphosphate. It functions in the pathway nucleotide-sugar biosynthesis; ADP-L-glycero-beta-D-manno-heptose biosynthesis; ADP-L-glycero-beta-D-manno-heptose from D-glycero-beta-D-manno-heptose 7-phosphate: step 1/4. The protein operates within nucleotide-sugar biosynthesis; ADP-L-glycero-beta-D-manno-heptose biosynthesis; ADP-L-glycero-beta-D-manno-heptose from D-glycero-beta-D-manno-heptose 7-phosphate: step 3/4. Its function is as follows. Catalyzes the phosphorylation of D-glycero-D-manno-heptose 7-phosphate at the C-1 position to selectively form D-glycero-beta-D-manno-heptose-1,7-bisphosphate. Functionally, catalyzes the ADP transfer from ATP to D-glycero-beta-D-manno-heptose 1-phosphate, yielding ADP-D-glycero-beta-D-manno-heptose. In Azotobacter vinelandii (strain DJ / ATCC BAA-1303), this protein is Bifunctional protein HldE.